Reading from the N-terminus, the 265-residue chain is Indole-3-glycerol phosphate synthase (265 aa).

This sequence belongs to the TrpC family.

The enzyme catalyses 1-(2-carboxyphenylamino)-1-deoxy-D-ribulose 5-phosphate + H(+) = (1S,2R)-1-C-(indol-3-yl)glycerol 3-phosphate + CO2 + H2O. Its pathway is amino-acid biosynthesis; L-tryptophan biosynthesis; L-tryptophan from chorismate: step 4/5. This chain is Indole-3-glycerol phosphate synthase, found in Xanthomonas oryzae pv. oryzae (strain MAFF 311018).